An 893-amino-acid chain; its full sequence is AP-4 complex accessory subunit RUSC1 (893 aa).

4 disordered regions span residues Glu-31 to Glu-223, Glu-237 to Ser-332, Ser-339 to Arg-358, and Leu-366 to Ala-444. Over residues His-77–Pro-87 the composition is skewed to polar residues. Composition is skewed to low complexity over residues Ser-95–Pro-117 and Pro-149–Ser-165. Residues Ser-177–Asp-187 show a composition bias toward polar residues. Positions Glu-237 to Glu-257 are enriched in basic and acidic residues. Pro residues-rich tracts occupy residues Gln-373–Pro-382 and Pro-390–Pro-399. The tract at residues Met-463–Asn-598 is interaction with TRAF6. Residues Asp-515–Glu-659 form the RUN domain. The interaction with IKBKG stretch occupies residues Thr-599–Pro-665. 2 disordered regions span residues Arg-700–Ser-721 and His-751–Arg-772. 2 stretches are compositionally biased toward low complexity: residues Thr-702–Ser-714 and Thr-754–Pro-770. The region spanning Gln-835–Leu-893 is the SH3 domain.

In terms of assembly, associated component of the adapter-like complex 4 (AP-4). Interacts with IKBKG and TRAF6. Interacts with F-actin, acetylated actin, TUBB3, STX1A, KIF5B and KLC1. Phosphorylated on serine residues following nuclear translocation. In terms of processing, polyubiquitinated; polyubiquitination involves TRAF6. In terms of tissue distribution, expressed in brain, brain stem and spinal cord (at protein level).

The protein localises to the cytoplasm. The protein resides in the nucleus. It localises to the cytoskeleton. It is found in the cytoplasmic vesicle. Its subcellular location is the early endosome. The protein localises to the postsynaptic density. The protein resides in the golgi apparatus. Functionally, associates with the adapter-like complex 4 (AP-4) and may therefore play a role in vesicular trafficking of proteins at the trans-Golgi network. Signaling adapter which plays a role in neuronal differentiation. Involved in regulation of NGF-dependent neurite outgrowth. May play a role in neuronal vesicular trafficking, specifically involving pre-synaptic membrane proteins. Seems to be involved in signaling pathways that are regulated by the prolonged activation of MAPK. Can regulate the polyubiquitination of IKBKG and thus may be involved in regulation of the NF-kappa-B pathway. This Mus musculus (Mouse) protein is AP-4 complex accessory subunit RUSC1.